Consider the following 38-residue polypeptide: Photosystem II reaction center protein L (38 aa).

A helical membrane pass occupies residues serine 17–phenylalanine 37.

Belongs to the PsbL family. In terms of assembly, PSII is composed of 1 copy each of membrane proteins PsbA, PsbB, PsbC, PsbD, PsbE, PsbF, PsbH, PsbI, PsbJ, PsbK, PsbL, PsbM, PsbT, PsbX, PsbY, PsbZ, Psb30/Ycf12, at least 3 peripheral proteins of the oxygen-evolving complex and a large number of cofactors. It forms dimeric complexes.

Its subcellular location is the plastid. The protein resides in the chloroplast thylakoid membrane. Functionally, one of the components of the core complex of photosystem II (PSII). PSII is a light-driven water:plastoquinone oxidoreductase that uses light energy to abstract electrons from H(2)O, generating O(2) and a proton gradient subsequently used for ATP formation. It consists of a core antenna complex that captures photons, and an electron transfer chain that converts photonic excitation into a charge separation. This subunit is found at the monomer-monomer interface and is required for correct PSII assembly and/or dimerization. The chain is Photosystem II reaction center protein L from Amborella trichopoda.